Here is a 192-residue protein sequence, read N- to C-terminus: Mitochondrial import inner membrane translocase subunit TIM18 (192 aa).

A mitochondrion-targeting transit peptide spans 1–42 (MLLFPGLKPVLNASTVIVNPVRAVFPGLVLSTKRSFYSINRL). Residues 43–88 (NAENKINDIANTSKEASSSVQMFKPPEFSQFKDSYQKDYERIAKYT) are Mitochondrial matrix-facing. A helical transmembrane segment spans residues 89–109 (LIPLTMVPFYASFTGGVINPL). Residues 110–113 (LDAS) lie on the Mitochondrial intermembrane side of the membrane. A helical transmembrane segment spans residues 114–134 (LSSIFLIYLQYGFTSCIIDYI). The Mitochondrial matrix portion of the chain corresponds to 135 to 144 (PKEKYPRWHK). The helical transmembrane segment at 145–165 (LALYCLYGGSMLSLYGIYELE) threads the bilayer. The Mitochondrial intermembrane portion of the chain corresponds to 166-192 (TKNNGFVDLVKKLWNENDDHLYIFGRN).

It belongs to the CybS family. Component of the TIM22 complex, whose core is composed of TIM18, TIM22 and TIM54, associated with the peripheral proteins MRS5/TIM12 and the 70 kDa heterohexamer composed of TIM9 and TIM10 (or TIM8 and TIM13).

It localises to the mitochondrion inner membrane. Component of the TIM22 complex, a complex that mediates the import and insertion of multi-pass transmembrane proteins into the mitochondrial inner membrane. The TIM22 complex forms a twin-pore translocase that uses the membrane potential as external driving force. Its role in the complex is unclear but it may be involved in the assembly and stabilization of the TIM22 complex. The chain is Mitochondrial import inner membrane translocase subunit TIM18 (TIM18) from Saccharomyces cerevisiae (strain ATCC 204508 / S288c) (Baker's yeast).